A 293-amino-acid chain; its full sequence is Alcohol dehydrogenase 1 (293 aa).

Zn(2+) is bound by residues Cys-26, Cys-29, Cys-32, Cys-40, and Cys-104. Residues 129 to 134, Asp-153, Arg-158, Thr-199, Val-222, 222 to 224, and Phe-249 contribute to the NAD(+) site; these read GLGAVG and VGV.

This sequence belongs to the zinc-containing alcohol dehydrogenase family. Homodimer. The cofactor is Zn(2+).

It localises to the cytoplasm. It carries out the reaction a primary alcohol + NAD(+) = an aldehyde + NADH + H(+). It catalyses the reaction a secondary alcohol + NAD(+) = a ketone + NADH + H(+). The polypeptide is Alcohol dehydrogenase 1 (ADH1) (Zea luxurians (Guatemalan teosinte)).